The sequence spans 23 residues: Hemocyanin subunit 4 (23 aa).

It belongs to the tyrosinase family. Hemocyanin subfamily. In terms of tissue distribution, hemolymph.

The protein resides in the secreted. The protein localises to the extracellular space. Functionally, hemocyanins are copper-containing oxygen carriers occurring freely dissolved in the hemolymph of many mollusks and arthropods. The sequence is that of Hemocyanin subunit 4 from Carcinus maenas (Common shore crab).